We begin with the raw amino-acid sequence, 546 residues long: Protein phosphatase 1G (546 aa).

Gly2 is lipidated: N-myristoyl glycine. Residue Arg22 is modified to Omega-N-methylarginine. The PPM-type phosphatase domain occupies Pro26 to Phe505. Positions 60 and 61 each coordinate Mn(2+). Disordered regions lie at residues Gln116–Asn139 and Gly161–Gly328. Thr122 carries the post-translational modification Phosphothreonine. The segment covering Glu123–Asn139 has biased composition (acidic residues). The residue at position 183 (Ser183) is a Phosphoserine. Residues Asp259 to Met312 are compositionally biased toward acidic residues. Lys383 carries the N6-acetyllysine modification. Positions 441 and 496 each coordinate Mn(2+). The interval Glu512–Asp546 is disordered. Phosphoserine is present on Ser527.

It belongs to the PP2C family. Interacts with NOL3; may dephosphorylate NOL3. Mg(2+) serves as cofactor. The cofactor is Mn(2+). In terms of tissue distribution, widely expressed. Most abundant in testis, skeletal muscle, and heart.

Its subcellular location is the cytoplasm. It is found in the membrane. The catalysed reaction is O-phospho-L-seryl-[protein] + H2O = L-seryl-[protein] + phosphate. It catalyses the reaction O-phospho-L-threonyl-[protein] + H2O = L-threonyl-[protein] + phosphate. This is Protein phosphatase 1G (PPM1G) from Homo sapiens (Human).